The chain runs to 456 residues: Ribosome assembly protein METTL17, mitochondrial (456 aa).

A mitochondrion-targeting transit peptide spans 1–19; the sequence is MAAALKCLLTLGRWCPGLG. Cys-333, Cys-339, Cys-347, and Cys-404 together coordinate [4Fe-4S] cluster.

The protein belongs to the methyltransferase superfamily. Rsm22 family. Associates with the mitochondrial ribosome (mitoribosome).

The protein resides in the mitochondrion matrix. Functionally, mitochondrial ribosome (mitoribosome) assembly factor. Binds at the interface of the head and body domains of the mitochondrial small ribosomal subunit (mt-SSU), occluding the mRNA channel and preventing compaction of the head domain towards the body. Probable inactive methyltransferase: retains the characteristic folding and ability to bind S-adenosyl-L-methionine, but it probably lost its methyltransferase activity. This is Ribosome assembly protein METTL17, mitochondrial from Homo sapiens (Human).